The chain runs to 266 residues: 3-methyl-2-oxobutanoate hydroxymethyltransferase (266 aa).

2 residues coordinate Mg(2+): D45 and D84. 3-methyl-2-oxobutanoate contacts are provided by residues 45–46 (DS), D84, and K112. E114 provides a ligand contact to Mg(2+). The Proton acceptor role is filled by E181.

The protein belongs to the PanB family. As to quaternary structure, homodecamer; pentamer of dimers. It depends on Mg(2+) as a cofactor.

It is found in the cytoplasm. The enzyme catalyses 3-methyl-2-oxobutanoate + (6R)-5,10-methylene-5,6,7,8-tetrahydrofolate + H2O = 2-dehydropantoate + (6S)-5,6,7,8-tetrahydrofolate. Its pathway is cofactor biosynthesis; (R)-pantothenate biosynthesis; (R)-pantoate from 3-methyl-2-oxobutanoate: step 1/2. Functionally, catalyzes the reversible reaction in which hydroxymethyl group from 5,10-methylenetetrahydrofolate is transferred onto alpha-ketoisovalerate to form ketopantoate. The sequence is that of 3-methyl-2-oxobutanoate hydroxymethyltransferase from Pseudomonas fluorescens (strain SBW25).